A 294-amino-acid chain; its full sequence is Glyceraldehyde-3-phosphate dehydrogenase (294 aa).

Residues Asp19, Arg63, and Thr105 each contribute to the NAD(+) site. D-glyceraldehyde 3-phosphate-binding positions include Ser134–Thr136 and Thr165. Cys135 (nucleophile) is an active-site residue. The tract at residues Lys169–Asn188 is disordered. D-glyceraldehyde 3-phosphate-binding positions include Thr194 to Gly195 and Arg217.

This sequence belongs to the glyceraldehyde-3-phosphate dehydrogenase family. Homotetramer.

The protein localises to the cytoplasm. The enzyme catalyses D-glyceraldehyde 3-phosphate + phosphate + NAD(+) = (2R)-3-phospho-glyceroyl phosphate + NADH + H(+). Its pathway is carbohydrate degradation; glycolysis; pyruvate from D-glyceraldehyde 3-phosphate: step 1/5. Catalyzes the oxidative phosphorylation of glyceraldehyde 3-phosphate (G3P) to 1,3-bisphosphoglycerate (BPG) using the cofactor NAD. The first reaction step involves the formation of a hemiacetal intermediate between G3P and a cysteine residue, and this hemiacetal intermediate is then oxidized to a thioester, with concomitant reduction of NAD to NADH. The reduced NADH is then exchanged with the second NAD, and the thioester is attacked by a nucleophilic inorganic phosphate to produce BPG. This chain is Glyceraldehyde-3-phosphate dehydrogenase (gap), found in Citrobacter freundii.